We begin with the raw amino-acid sequence, 369 residues long: Chorismate synthase (369 aa).

Positions 48 and 54 each coordinate NADP(+). Residues Arg-125 to Ser-127, Asn-238 to Ala-239, Gly-278, Lys-293 to Ser-297, and Arg-319 contribute to the FMN site.

Belongs to the chorismate synthase family. Homotetramer. FMNH2 is required as a cofactor.

The catalysed reaction is 5-O-(1-carboxyvinyl)-3-phosphoshikimate = chorismate + phosphate. It participates in metabolic intermediate biosynthesis; chorismate biosynthesis; chorismate from D-erythrose 4-phosphate and phosphoenolpyruvate: step 7/7. Functionally, catalyzes the anti-1,4-elimination of the C-3 phosphate and the C-6 proR hydrogen from 5-enolpyruvylshikimate-3-phosphate (EPSP) to yield chorismate, which is the branch point compound that serves as the starting substrate for the three terminal pathways of aromatic amino acid biosynthesis. This reaction introduces a second double bond into the aromatic ring system. This chain is Chorismate synthase, found in Burkholderia thailandensis (strain ATCC 700388 / DSM 13276 / CCUG 48851 / CIP 106301 / E264).